Reading from the N-terminus, the 352-residue chain is Sperm equatorial segment protein 1 (352 aa).

The first 19 residues, 1-19 (MKSLVLLVALLLWSSSVPA), serve as a signal peptide directing secretion. Asn-128 is a glycosylation site (N-linked (GlcNAc...) asparagine). A disordered region spans residues 140 to 203 (IEKEEPEPEP…TESEDVPQLS (64 aa)). Positions 166–193 (TESSTSPYVTSYKSPVTTSDRSTGIEIS) are enriched in polar residues.

This sequence belongs to the SPESP1 family. Post-translationally, glycosylated. In testis there are two predominant forms of 77- and 67-kDa and a form of 47-kDa, whereas in epididymal sperm from caput, corpus, and cauda there are two forms of 47- and 43-kDa. Testis forms contain complex carbohydrate residues. Epididymal sperm forms are N-glycosylated. Then undergoes significant glycosylation in the testis and that the majority of these glycoconjugates are removed by the time sperm reach the caput epididymis.

The protein resides in the cytoplasmic vesicle. It localises to the secretory vesicle. Its subcellular location is the acrosome. Involved in fertilization ability of sperm. The protein is Sperm equatorial segment protein 1 of Macaca fascicularis (Crab-eating macaque).